Reading from the N-terminus, the 502-residue chain is MPKKGKKPKLPLTDEEQLILFQQKLLADEEAAKKKERLLTQFLKDKLAKEEHNSSLNLNKINTQWRTVLREVKTRELHKDIEILSQIFERVVDCKDSVIKSLARDLTEAEEQYAHALRGHLHNVDQLLTLQRRRLSLLEENYNMELEVLTKEFETERKAILDHHDKEIHYLHDVFMAMEQNYVDSEYESKLEFQSMWDDLKNKNLEEKHFLRLQLENVVEDLWRRFQDALKNYTDATEDRKIAFETLKVKDEKSSKEIEVQMKKIQRLQEAISALKGKIVAHSREGEWQNQCIRNDKELVHVQLRKLKIQRTQARTESQENLVKLTLESNATLKALKKVVEKGEKILKLAEICRKFETEEEKVLPFYSSALTPEEQEEVEIQSQEEITEDLAKIMMDYLGMENFWKRYNKVKLEVLSLQHRRLQLLDISSKLREMLKQYLDGISVSDEVLSRLNPLFIVNHKSNLPQLPPSAAQPGGDRGPGGDRRLTYNVIEAAHIASHIL.

Coiled coils occupy residues 96–160 (DSVI…RKAI) and 252–285 (EKSS…HSRE).

The protein belongs to the DRC2 family. Component of the nexin-dynein regulatory complex (N-DRC). Interacts with DRC1.

The protein resides in the cytoplasm. It localises to the cytoskeleton. It is found in the flagellum basal body. The protein localises to the cell projection. Its subcellular location is the cilium. The protein resides in the flagellum. It localises to the flagellum axoneme. Its function is as follows. Component of the nexin-dynein regulatory complex (N-DRC), a key regulator of ciliary/flagellar motility which maintains the alignment and integrity of the distal axoneme and regulates microtubule sliding in motile axonemes. Plays a critical role in the assembly of N-DRC and also stabilizes the assembly of multiple inner dynein arms and radial spokes. Coassembles with DRC1 to form a central scaffold needed for assembly of the N-DRC and its attachment to the outer doublet microtubules. The polypeptide is Dynein regulatory complex subunit 2 (Ccdc65) (Rattus norvegicus (Rat)).